A 208-amino-acid polypeptide reads, in one-letter code: Protein-L-isoaspartate O-methyltransferase (208 aa).

Residue serine 59 is part of the active site.

It belongs to the methyltransferase superfamily. L-isoaspartyl/D-aspartyl protein methyltransferase family.

It localises to the cytoplasm. The enzyme catalyses [protein]-L-isoaspartate + S-adenosyl-L-methionine = [protein]-L-isoaspartate alpha-methyl ester + S-adenosyl-L-homocysteine. Catalyzes the methyl esterification of L-isoaspartyl residues in peptides and proteins that result from spontaneous decomposition of normal L-aspartyl and L-asparaginyl residues. It plays a role in the repair and/or degradation of damaged proteins. In Salmonella paratyphi A (strain ATCC 9150 / SARB42), this protein is Protein-L-isoaspartate O-methyltransferase.